The following is a 542-amino-acid chain: Esterase 6 (542 aa).

Positions 1-19 (MNYVGLIIVLSCLWLGSNA) are cleaved as a signal peptide. Residue Asn-40 is glycosylated (N-linked (GlcNAc...) asparagine). Cys-84 and Cys-103 form a disulfide bridge. Ser-207 acts as the Acyl-ester intermediate in catalysis. A disulfide bridge connects residues Cys-259 and Cys-271. 2 N-linked (GlcNAc...) asparagine glycosylation sites follow: Asn-418 and Asn-454. His-464 acts as the Charge relay system in catalysis. Cys-512 and Cys-533 are joined by a disulfide.

The protein belongs to the type-B carboxylesterase/lipase family. Monomer.

The protein resides in the secreted. The enzyme catalyses a carboxylic ester + H2O = an alcohol + a carboxylate + H(+). Its function is as follows. Transferred from the ejaculatory bulbs of males to the female genitals upon copulation, plays an important role in the reproductive biology. The polypeptide is Esterase 6 (Est-6) (Drosophila simulans (Fruit fly)).